Here is a 384-residue protein sequence, read N- to C-terminus: Dihydrolipoyllysine-residue acetyltransferase component of pyruvate dehydrogenase complex (384 aa).

One can recognise a Lipoyl-binding domain in the interval 2 to 77; that stretch reads ANEFKFTDVG…SIGQVMAVIG (76 aa). The residue at position 43 (lysine 43) is an N6-lipoyllysine. The active site involves histidine 356.

The protein belongs to the 2-oxoacid dehydrogenase family. In terms of assembly, forms a 24-polypeptide structural core with octahedral symmetry. The cofactor is (R)-lipoate.

The enzyme catalyses N(6)-[(R)-dihydrolipoyl]-L-lysyl-[protein] + acetyl-CoA = N(6)-[(R)-S(8)-acetyldihydrolipoyl]-L-lysyl-[protein] + CoA. Functionally, the pyruvate dehydrogenase complex catalyzes the overall conversion of pyruvate to acetyl-CoA and CO(2). It contains multiple copies of three enzymatic components: pyruvate dehydrogenase (E1), dihydrolipoamide acetyltransferase (E2) and lipoamide dehydrogenase (E3). In Mycoplasma genitalium (strain ATCC 33530 / DSM 19775 / NCTC 10195 / G37) (Mycoplasmoides genitalium), this protein is Dihydrolipoyllysine-residue acetyltransferase component of pyruvate dehydrogenase complex (pdhC).